A 135-amino-acid polypeptide reads, in one-letter code: uncharacterized protein (135 aa).

Positions 1-75 are disordered; sequence MAAATETGQA…PPPRPPQRRC (75 aa).

This is an uncharacterized protein from Homo sapiens (Human).